A 736-amino-acid chain; its full sequence is Microtubule-associated protein mu-2 (736 aa).

The protein belongs to the orthoreovirus mu-2 protein family. As to quaternary structure, interacts with protein mu-NS; in viral inclusions. Interacts with polymerase lambda-3; this interaction stimulates the ATPase activity of mu-2. Requires a divalent metal cation as cofactor.

It localises to the virion. The protein localises to the host cytoplasm. The protein resides in the host cytoskeleton. Its function is as follows. Minor inner capsid (core) component. Displays NTPase and RNA 5'-triphosphatase (RTPase) activities. ATP is the preferred substrate for hydrolysis. May function as a cofactor of polymerase lambda-3. Associates with microtubules and plays a role in the formation, structural organization and morphology of viral inclusions, where the assembly of cores and the replication of viral RNA occur. Together with mu-NS, recruits the other core proteins to these inclusions. The protein is Microtubule-associated protein mu-2 (M1) of Mammalia (T2J).